Here is a 273-residue protein sequence, read N- to C-terminus: E3 ubiquitin-protein ligase SDIR1 (273 aa).

The Cytoplasmic portion of the chain corresponds to 1 to 33 (MSFVFRGSRGDLESGFSGGFLPERRAMRVHGAR). The chain crosses the membrane as a helical span at residues 34–54 (PVNSNSLAFLVTVLLLFMILN). The Lumenal portion of the chain corresponds to 55–56 (SH). The helical transmembrane segment at 57–77 (QMPPNFLLWLVLGVFLMATTL) threads the bilayer. At 78 to 273 (RMYATCQQLQ…EIDDDASDMV (196 aa)) the chain is on the cytoplasmic side. The RING-type; atypical zinc finger occupies 211–252 (CSVCLEQVTVGEIVRTLPCLHQFHAGCIDPWLRQQGTCPVCK).

As to quaternary structure, interacts with ATP1/SDIRIP1. As to expression, ubiquitous.

The protein resides in the endoplasmic reticulum membrane. It carries out the reaction S-ubiquitinyl-[E2 ubiquitin-conjugating enzyme]-L-cysteine + [acceptor protein]-L-lysine = [E2 ubiquitin-conjugating enzyme]-L-cysteine + N(6)-ubiquitinyl-[acceptor protein]-L-lysine.. Its function is as follows. E3 ubiquitin-protein ligase that acts as a positive regulator of abscisic acid-related stress signal transduction. Interacts with and ubiquitinates ATP1/SDIRIP1 to modulate ATP1/SDIRIP1 stability through the 26S proteasome pathway. Regulates abscisic acid (ABA) and salt stress responses by negatively affecting ATP1/SDIRIP1 stability. The SDIR1-ATP1/SDIRIP1 complex plays an important role in ABA signaling through the ubiquitination pathway. This chain is E3 ubiquitin-protein ligase SDIR1, found in Arabidopsis thaliana (Mouse-ear cress).